Here is a 503-residue protein sequence, read N- to C-terminus: Catalase (503 aa).

Residues 1–26 (MAKDDKRLTGLFGHPVSDRENSMTAG) are disordered. Residues His-56 and Asn-129 contribute to the active site. Position 339 (Tyr-339) interacts with heme.

This sequence belongs to the catalase family. Homodimer. Heme serves as cofactor.

It carries out the reaction 2 H2O2 = O2 + 2 H2O. In terms of biological role, decomposes hydrogen peroxide into water and oxygen; serves to protect cells from the toxic effects of hydrogen peroxide. The protein is Catalase (katA) of Staphylococcus haemolyticus (strain JCSC1435).